Reading from the N-terminus, the 511-residue chain is Aldehyde dehydrogenase 2, mitochondrial (511 aa).

The transit peptide at 1 to 21 (MSKSKTKTDKRNQSSLSRIKL) directs the protein to the mitochondrion. A disordered region spans residues 72-92 (VSEKSQHDSTEEDITQVSEKS). 274–279 (GSTLVG) serves as a coordination point for NAD(+). E297 functions as the Proton acceptor in the catalytic mechanism. C331 functions as the Nucleophile in the catalytic mechanism.

It belongs to the aldehyde dehydrogenase family.

Its subcellular location is the mitochondrion matrix. The enzyme catalyses an aldehyde + NAD(+) + H2O = a carboxylate + NADH + 2 H(+). It participates in alcohol metabolism; ethanol degradation; acetate from ethanol: step 2/2. This is Aldehyde dehydrogenase 2, mitochondrial (ALD2) from Saccharomyces cerevisiae (Baker's yeast).